The following is a 327-amino-acid chain: Altered inheritance rate of mitochondria protein 25 (327 aa).

It belongs to the phospholipid scramblase family.

Its subcellular location is the mitochondrion. The chain is Altered inheritance rate of mitochondria protein 25 (AIM25) from Saccharomyces cerevisiae (strain ATCC 204508 / S288c) (Baker's yeast).